The sequence spans 249 residues: Metallo-beta-lactamase type 2 (249 aa).

The signal sequence occupies residues 1-18 (MKTVFILISMLFPVAVMA). His99, His101, Asp103, His162, and Cys181 together coordinate Zn(2+). Residues Lys184 and Asn193 each coordinate substrate. His223 contributes to the Zn(2+) binding site.

This sequence belongs to the metallo-beta-lactamase superfamily. Class-B beta-lactamase family. As to quaternary structure, monomer. Zn(2+) serves as cofactor.

Its subcellular location is the periplasm. The catalysed reaction is a beta-lactam + H2O = a substituted beta-amino acid. Its activity is regulated as follows. Competitively inhibited by 4-morpholineethanesulfonic acid (MES), SB236050 and biphenyl tetrazoles (BPTs). Also inhibited by chelating agents such as EDTA and 1,10-phenanthroline. CcrA is not susceptible to inactivation by the beta-lactamase-blocking agents clavulanic acid or tazobactam. Confers resistance to the different beta-lactams antibiotics (penicillin, cephalosporin and carbapenem) via the hydrolysis of the beta-lactam ring. This Bacteroides fragilis protein is Metallo-beta-lactamase type 2.